Here is a 197-residue protein sequence, read N- to C-terminus: Holliday junction branch migration complex subunit RuvA (197 aa).

The interval 1–63 (MYAYLKGIIT…EDAHLLYGFR (63 aa)) is domain I. The tract at residues 64 to 142 (SEDEKKLFLS…VAGDDLPAKV (79 aa)) is domain II. The tract at residues 143–147 (AVQAS) is flexible linker. The tract at residues 148–197 (AENQELEEAMEAMLALGYKATELKKIKKFFEGTTDTAENYIKSALKMLVK) is domain III.

It belongs to the RuvA family. As to quaternary structure, homotetramer. Forms an RuvA(8)-RuvB(12)-Holliday junction (HJ) complex. HJ DNA is sandwiched between 2 RuvA tetramers; dsDNA enters through RuvA and exits via RuvB. An RuvB hexamer assembles on each DNA strand where it exits the tetramer. Each RuvB hexamer is contacted by two RuvA subunits (via domain III) on 2 adjacent RuvB subunits; this complex drives branch migration. In the full resolvosome a probable DNA-RuvA(4)-RuvB(12)-RuvC(2) complex forms which resolves the HJ.

The protein localises to the cytoplasm. Functionally, the RuvA-RuvB-RuvC complex processes Holliday junction (HJ) DNA during genetic recombination and DNA repair, while the RuvA-RuvB complex plays an important role in the rescue of blocked DNA replication forks via replication fork reversal (RFR). RuvA specifically binds to HJ cruciform DNA, conferring on it an open structure. The RuvB hexamer acts as an ATP-dependent pump, pulling dsDNA into and through the RuvAB complex. HJ branch migration allows RuvC to scan DNA until it finds its consensus sequence, where it cleaves and resolves the cruciform DNA. This Streptococcus pneumoniae serotype 19F (strain G54) protein is Holliday junction branch migration complex subunit RuvA.